The chain runs to 349 residues: Ion-translocating oxidoreductase complex subunit D (349 aa).

The next 3 membrane-spanning stretches (helical) occupy residues 36 to 56 (CAFF…VALS), 77 to 99 (SAML…WMIV), and 124 to 144 (AMAA…TWIA). An FMN phosphoryl threonine modification is found at T185. 5 helical membrane passes run 212–232 (STGV…IVLL), 239–259 (WHIS…GFLL), 265–285 (ASPL…FIAT), 291–311 (ATSP…VYII), and 315–335 (GGYP…APFI).

This sequence belongs to the NqrB/RnfD family. As to quaternary structure, the complex is composed of six subunits: RnfA, RnfB, RnfC, RnfD, RnfE and RnfG. FMN is required as a cofactor.

The protein localises to the cell inner membrane. Part of a membrane-bound complex that couples electron transfer with translocation of ions across the membrane. The polypeptide is Ion-translocating oxidoreductase complex subunit D (Shewanella oneidensis (strain ATCC 700550 / JCM 31522 / CIP 106686 / LMG 19005 / NCIMB 14063 / MR-1)).